The following is a 360-amino-acid chain: Photosystem II protein D1 1 (360 aa).

The next 3 helical transmembrane spans lie at 29 to 46, 118 to 133, and 142 to 156; these read YIGW…TATT, HFLI…QWEL, and WICV…AATA. His118 contacts chlorophyll a. Tyr126 is a binding site for pheophytin a. Residues Asp170 and Glu189 each coordinate [CaMn4O5] cluster. A helical transmembrane segment spans residues 197-218; that stretch reads FHMLGVAGVFGGALFAAMHGSL. His198 serves as a coordination point for chlorophyll a. A quinone is bound by residues His215 and 264–265; that span reads SF. His215 is a binding site for Fe cation. Position 272 (His272) interacts with Fe cation. Residues 274-288 form a helical membrane-spanning segment; the sequence is FLGAWPVVGIWFAAL. [CaMn4O5] cluster is bound by residues His332, Glu333, Asp342, and Ala344. Positions 345–360 are excised as a propeptide; sequence SGDAQMVALNAPAIEG.

The protein belongs to the reaction center PufL/M/PsbA/D family. As to quaternary structure, PSII is composed of 1 copy each of membrane proteins PsbA, PsbB, PsbC, PsbD, PsbE, PsbF, PsbH, PsbI, PsbJ, PsbK, PsbL, PsbM, PsbT, PsbX, PsbY, PsbZ, Psb30/Ycf12, peripheral proteins PsbO, CyanoQ (PsbQ), PsbU, PsbV and a large number of cofactors. It forms dimeric complexes. The D1/D2 heterodimer binds P680, chlorophylls that are the primary electron donor of PSII, and subsequent electron acceptors. It shares a non-heme iron and each subunit binds pheophytin, quinone, additional chlorophylls, carotenoids and lipids. D1 provides most of the ligands for the Mn4-Ca-O5 cluster of the oxygen-evolving complex (OEC). There is also a Cl(-1) ion associated with D1 and D2, which is required for oxygen evolution. The PSII complex binds additional chlorophylls, carotenoids and specific lipids. is required as a cofactor. C-terminally processed by CtpA; processing is essential to allow assembly of the oxygen-evolving complex and photosynthetic growth. In terms of processing, tyr-161 forms a radical intermediate that is referred to as redox-active TyrZ, YZ or Y-Z. Post-translationally, C-terminally processed by CtpA; processing is essential to allow assembly of the oxygen-evolving complex and thus photosynthetic growth.

It localises to the cellular thylakoid membrane. The catalysed reaction is 2 a plastoquinone + 4 hnu + 2 H2O = 2 a plastoquinol + O2. Photosystem II (PSII) is a light-driven water:plastoquinone oxidoreductase that uses light energy to abstract electrons from H(2)O, generating O(2) and a proton gradient subsequently used for ATP formation. It consists of a core antenna complex that captures photons, and an electron transfer chain that converts photonic excitation into a charge separation. The D1/D2 (PsbA/PsbD) reaction center heterodimer binds P680, the primary electron donor of PSII as well as several subsequent electron acceptors. This is Photosystem II protein D1 1 from Synechocystis sp. (strain ATCC 27184 / PCC 6803 / Kazusa).